Consider the following 263-residue polypeptide: MSEEERKQHVVLVHGACHGAWCWYKVKPQLEASGHRVTAVDLAASGIDMTRSITDISTCEQYSEPLMQLMTSLPDDEKVVLVGHSLGGLSLAMAMDMFPTKISVSVFVTAMMPDTKHSPSFVWDKLRKETSREEWLDTVFTSEKPDFPSEFWIFGPEFMAKNLYQLSPVQDLELAKMLVRANPLIKKDMAERRSFSEEGYGSVTRIFIVCGKDLVSPEDYQRSMISNFPPKEVMEIKDADHMPMFSKPQQLCALLLEIANKYA.

Catalysis depends on Ser-85, which acts as the Acyl-ester intermediate. Residues Asp-213 and His-241 each act as charge relay system in the active site.

The protein belongs to the AB hydrolase superfamily. Methylesterase family.

The catalysed reaction is methyl (indol-3-yl)acetate + H2O = (indol-3-yl)acetate + methanol + H(+). It carries out the reaction methyl (-)-jasmonate + H2O = jasmonate + methanol + H(+). The protein operates within plant hormone biosynthesis. Its pathway is lipid metabolism; oxylipin biosynthesis. In terms of biological role, methylesterase shown to have carboxylesterase activity, methyl indole-3-acetic acid (MeIAA) esterase activity and methyl jasmonate (MeJA) esterase activity in vitro. This Arabidopsis thaliana (Mouse-ear cress) protein is Methylesterase 3.